Consider the following 490-residue polypeptide: Ketol-acid reductoisomerase (NADP(+)) (490 aa).

In terms of domain architecture, KARI N-terminal Rossmann spans 18-208 (AKCRFMDSSE…GGHKAGVLMS (191 aa)). NADP(+)-binding positions include 45–48 (CGAQ), R68, R76, S78, and 108–110 (DKQ). Residue H132 is part of the active site. Residue G158 participates in NADP(+) binding. 2 KARI C-terminal knotted domains span residues 209 to 344 (SFIA…KTPA) and 345 to 486 (GDVE…MADM). Residues D217, E221, E389, and E393 each contribute to the Mg(2+) site. Substrate is bound at residue S414.

Belongs to the ketol-acid reductoisomerase family. Requires Mg(2+) as cofactor.

The enzyme catalyses (2R)-2,3-dihydroxy-3-methylbutanoate + NADP(+) = (2S)-2-acetolactate + NADPH + H(+). The catalysed reaction is (2R,3R)-2,3-dihydroxy-3-methylpentanoate + NADP(+) = (S)-2-ethyl-2-hydroxy-3-oxobutanoate + NADPH + H(+). It functions in the pathway amino-acid biosynthesis; L-isoleucine biosynthesis; L-isoleucine from 2-oxobutanoate: step 2/4. The protein operates within amino-acid biosynthesis; L-valine biosynthesis; L-valine from pyruvate: step 2/4. Its function is as follows. Involved in the biosynthesis of branched-chain amino acids (BCAA). Catalyzes an alkyl-migration followed by a ketol-acid reduction of (S)-2-acetolactate (S2AL) to yield (R)-2,3-dihydroxy-isovalerate. In the isomerase reaction, S2AL is rearranged via a Mg-dependent methyl migration to produce 3-hydroxy-3-methyl-2-ketobutyrate (HMKB). In the reductase reaction, this 2-ketoacid undergoes a metal-dependent reduction by NADPH to yield (R)-2,3-dihydroxy-isovalerate. The polypeptide is Ketol-acid reductoisomerase (NADP(+)) (Marinomonas sp. (strain MWYL1)).